The following is a 178-amino-acid chain: Large ribosomal subunit protein uL6 (178 aa).

The protein belongs to the universal ribosomal protein uL6 family. As to quaternary structure, part of the 50S ribosomal subunit.

This protein binds to the 23S rRNA, and is important in its secondary structure. It is located near the subunit interface in the base of the L7/L12 stalk, and near the tRNA binding site of the peptidyltransferase center. The polypeptide is Large ribosomal subunit protein uL6 (Campylobacter concisus (strain 13826)).